Reading from the N-terminus, the 66-residue chain is Regulator of G-protein signaling 6 (66 aa).

The 66-residue stretch at 1–66 folds into the RGS domain; sequence LAVQDLKKQP…EDAQEHIYKL (66 aa).

As to quaternary structure, interacts with GNB5. Interacts with RGS7BP, leading to regulate the subcellular location of the heterodimer formed with GNB5. Interacts with GNAI1.

It is found in the cytoplasm. The protein localises to the cytosol. It localises to the membrane. Its subcellular location is the nucleus. The protein resides in the cell membrane. Regulates G protein-coupled receptor signaling cascades. Inhibits signal transduction by increasing the GTPase activity of G protein alpha subunits, thereby driving them into their inactive GDP-bound form. The RGS6/GNB5 dimer enhances GNAO1 GTPase activity. This Rattus norvegicus (Rat) protein is Regulator of G-protein signaling 6 (Rgs6).